The following is a 314-amino-acid chain: S-methyl-5'-thioadenosine phosphorylase (314 aa).

Phosphate-binding positions include Ser-31, 73 to 74 (RH), and 106 to 107 (SA). Residue Met-207 coordinates substrate. Thr-208 contributes to the phosphate binding site. A substrate-binding site is contributed by 231–233 (DYD).

It belongs to the PNP/MTAP phosphorylase family. MTAP subfamily. As to quaternary structure, homohexamer. Dimer of a homotrimer.

It catalyses the reaction S-methyl-5'-thioadenosine + phosphate = 5-(methylsulfanyl)-alpha-D-ribose 1-phosphate + adenine. It participates in amino-acid biosynthesis; L-methionine biosynthesis via salvage pathway; S-methyl-5-thio-alpha-D-ribose 1-phosphate from S-methyl-5'-thioadenosine (phosphorylase route): step 1/1. Its function is as follows. Catalyzes the reversible phosphorylation of S-methyl-5'-thioadenosine (MTA) to adenine and 5-methylthioribose-1-phosphate. Involved in the breakdown of MTA, a major by-product of polyamine biosynthesis. Responsible for the first step in the methionine salvage pathway after MTA has been generated from S-adenosylmethionine. Has broad substrate specificity with 6-aminopurine nucleosides as preferred substrates. The polypeptide is S-methyl-5'-thioadenosine phosphorylase (Prochlorococcus marinus (strain SARG / CCMP1375 / SS120)).